The following is a 651-amino-acid chain: Acetyl-coenzyme A synthetase (651 aa).

Residues 193–196 (RRGK) and Thr-312 contribute to the CoA site. ATP is bound by residues 388–390 (GEP), 412–417 (DTWWQT), Asp-501, and Arg-516. Residue Ser-524 coordinates CoA. Residues Val-538, His-540, and Val-543 each coordinate Mg(2+). N6-acetyllysine is present on Lys-610.

Belongs to the ATP-dependent AMP-binding enzyme family. Requires Mg(2+) as cofactor. Acetylated. Deacetylation by the SIR2-homolog deacetylase activates the enzyme.

The catalysed reaction is acetate + ATP + CoA = acetyl-CoA + AMP + diphosphate. Functionally, catalyzes the conversion of acetate into acetyl-CoA (AcCoA), an essential intermediate at the junction of anabolic and catabolic pathways. AcsA undergoes a two-step reaction. In the first half reaction, AcsA combines acetate with ATP to form acetyl-adenylate (AcAMP) intermediate. In the second half reaction, it can then transfer the acetyl group from AcAMP to the sulfhydryl group of CoA, forming the product AcCoA. This is Acetyl-coenzyme A synthetase from Streptomyces coelicolor (strain ATCC BAA-471 / A3(2) / M145).